The following is a 79-amino-acid chain: D-alanyl carrier protein (79 aa).

A Carrier domain is found at M1–E77. An O-(pantetheine 4'-phosphoryl)serine modification is found at S35.

This sequence belongs to the DltC family. In terms of processing, 4'-phosphopantetheine is transferred from CoA to a specific serine of apo-DCP.

It is found in the cytoplasm. Its pathway is cell wall biogenesis; lipoteichoic acid biosynthesis. Functionally, carrier protein involved in the D-alanylation of lipoteichoic acid (LTA). The loading of thioester-linked D-alanine onto DltC is catalyzed by D-alanine--D-alanyl carrier protein ligase DltA. The DltC-carried D-alanyl group is further transferred to cell membrane phosphatidylglycerol (PG) by forming an ester bond, probably catalyzed by DltD. D-alanylation of LTA plays an important role in modulating the properties of the cell wall in Gram-positive bacteria, influencing the net charge of the cell wall. The protein is D-alanyl carrier protein of Lactobacillus acidophilus (strain ATCC 700396 / NCK56 / N2 / NCFM).